We begin with the raw amino-acid sequence, 182 residues long: UPF0397 protein BA_2640/GBAA_2640/BAS2460 (182 aa).

5 helical membrane passes run 9–29, 40–60, 71–91, 114–134, and 142–162; these read VVAI…GFSI, AILT…IGLI, WSIW…MGFI, ITGL…DIIV, and IVIQ…VLGL.

This sequence belongs to the UPF0397 family.

It localises to the cell membrane. This chain is UPF0397 protein BA_2640/GBAA_2640/BAS2460, found in Bacillus anthracis.